The sequence spans 305 residues: Endonuclease 1 (305 aa).

A signal peptide spans 1–28 (MASAFRSSTRLILVLGILILCSVSSVRS). The a divalent metal cation site is built by W29 and H34. 29-34 (WSKEGH) contributes to the substrate binding site. C38 and C69 form a disulfide bridge. Residues D73 and H88 each contribute to the a divalent metal cation site. Substrate-binding positions include 73–79 (DQIRHWY), 88–91 (HYID), and 98–103 (SYEYSR). Cystine bridges form between C97–C249, C105–C115, and C230–C236. Positions 122 and 139 each coordinate substrate. N122 carries an N-linked (GlcNAc...) asparagine glycan. N140 carries an N-linked (GlcNAc...) asparagine glycan. Residues H150, D154, H160, H184, and D188 each contribute to the a divalent metal cation site. The tract at residues 150 to 199 (HFMGDIHQPMHVGFTSDEGGNTIDLRWYKHKSNLHHVWDREIILTALKEN) is substrate binding. The N-linked (GlcNAc...) asparagine glycan is linked to N214. A propeptide spans 287–305 (MILNRVFSDDHAIAGVAAT) (removed in mature form).

This sequence belongs to the nuclease type I family. As to quaternary structure, monomer. The cofactor is Mn(2+). Ca(2+) serves as cofactor. As to expression, mostly expressed in flowers and during leaf and stem senescence, and, to a lower extent, detectable at low levels in roots, leaves, and stems. Particularly expressed in senescing tissues in a NAC92/ORE1-dependent manner.

It carries out the reaction Endonucleolytic cleavage to 5'-phosphomononucleotide and 5'-phosphooligonucleotide end-products.. Endonuclease that can use RNA, single-stranded and double-stranded DNA as substrates. Hydrolyzes single-stranded DNA and RNA without apparent specificity for bases during senescence. Endonuclease that recognizes and cleaves all types of mismatches with high efficiency, including heteroduplex double-stranded DNA. Maybe involved in programmed cell death (PCD) and senescence. The polypeptide is Endonuclease 1 (Arabidopsis thaliana (Mouse-ear cress)).